Consider the following 117-residue polypeptide: uncharacterized protein (117 aa).

This is an uncharacterized protein from Saccharomyces cerevisiae (strain ATCC 204508 / S288c) (Baker's yeast).